We begin with the raw amino-acid sequence, 66 residues long: Cold shock protein CspD (66 aa).

The 60-residue stretch at 4–63 (GKVKWFNNEKGFGFIEVEGGDDVFVHFTAIEGDGYKSLEEGQEVSFEIVEGNRGPQASNV) folds into the CSD domain.

The protein resides in the cytoplasm. In Bacillus subtilis (strain 168), this protein is Cold shock protein CspD (cspD).